The following is a 239-amino-acid chain: MEVDSKKSSDVVTKLPQKRFYRQRAHSNPIADHSFQYPAHPDEYEWSQHYPDIGDRRVAFADIGCGYGGFLVTLGEIYPDKFAVGMEIRVKVSDYVMDRIDALRKLHEGQYRNVACIRTNAMKYLTNFFHKAQLEKMFFLYPDPHFKKAKHKWRIINSALLSEYSYVLRKGGLIYTVTDVRDLHEWMCKHIEQHPAFERLSEAEVEADILSEKLLDSSEEGKKVTRNKGDKFVAIFRRV.

S-adenosyl-L-methionine-binding positions include Gly64, 87–88 (EI), 120–121 (NA), and Leu140. Asp143 is an active-site residue. 218-220 (SEE) contacts S-adenosyl-L-methionine.

The protein belongs to the class I-like SAM-binding methyltransferase superfamily. TrmB family.

The protein localises to the nucleus. The enzyme catalyses guanosine(46) in tRNA + S-adenosyl-L-methionine = N(7)-methylguanosine(46) in tRNA + S-adenosyl-L-homocysteine. The protein operates within tRNA modification; N(7)-methylguanine-tRNA biosynthesis. Functionally, catalyzes the formation of N(7)-methylguanine at position 46 (m7G46) in tRNA. The polypeptide is tRNA (guanine-N(7)-)-methyltransferase (Culex quinquefasciatus (Southern house mosquito)).